Here is a 518-residue protein sequence, read N- to C-terminus: Lysine 5,6-aminomutase alpha subunit (518 aa).

Pyridoxal 5'-phosphate is bound by residues 184–189 (RTTGQS), serine 238, tyrosine 263, arginine 268, and asparagine 299.

The protein belongs to the KamD family. As to quaternary structure, heterotetramer of 2 alpha and 2 beta subunits. Adenosylcob(III)alamin is required as a cofactor. Pyridoxal 5'-phosphate serves as cofactor.

The enzyme catalyses (3S)-3,6-diaminohexanoate = (3S,5S)-3,5-diaminohexanoate. The catalysed reaction is D-lysine = (2R,5S)-2,5-diaminohexanoate. It participates in amino-acid degradation; L-lysine degradation via acetate pathway. Its function is as follows. Catalyzes the migration of the L-beta-lysine and D-lysine epsilon amino group to the delta carbon to produce 3,5-diaminohexanoate and 2,5-diaminohexanoate, respectively. In Fusobacterium nucleatum subsp. nucleatum (strain ATCC 25586 / DSM 15643 / BCRC 10681 / CIP 101130 / JCM 8532 / KCTC 2640 / LMG 13131 / VPI 4355), this protein is Lysine 5,6-aminomutase alpha subunit.